A 507-amino-acid polypeptide reads, in one-letter code: ATP synthase subunit alpha (507 aa).

G170 to T177 provides a ligand contact to ATP.

The protein belongs to the ATPase alpha/beta chains family. As to quaternary structure, F-type ATPases have 2 components, CF(1) - the catalytic core - and CF(0) - the membrane proton channel. CF(1) has five subunits: alpha(3), beta(3), gamma(1), delta(1), epsilon(1). CF(0) has three main subunits: a(1), b(2) and c(9-12). The alpha and beta chains form an alternating ring which encloses part of the gamma chain. CF(1) is attached to CF(0) by a central stalk formed by the gamma and epsilon chains, while a peripheral stalk is formed by the delta and b chains.

It localises to the cell inner membrane. It carries out the reaction ATP + H2O + 4 H(+)(in) = ADP + phosphate + 5 H(+)(out). Its function is as follows. Produces ATP from ADP in the presence of a proton gradient across the membrane. The alpha chain is a regulatory subunit. In Thermosipho africanus (strain TCF52B), this protein is ATP synthase subunit alpha.